The primary structure comprises 615 residues: Afadin- and alpha-actinin-binding protein (615 aa).

2 coiled-coil regions span residues 126–227 (KLGS…IAMD) and 266–293 (RQKQ…SLLS). Ser290, Ser293, Ser313, and Ser319 each carry phosphoserine. The segment at 293-316 (SPQKKKPRERAEDGTGTVAISDIE) is disordered. Residues 375–461 (ISRQDHEQET…RSFTEAAIRL (87 aa)) adopt a coiled-coil conformation. Phosphoserine is present on residues Ser537, Ser541, and Ser543. A disordered region spans residues 567 to 615 (PEESKPSEVARESTDQKWSVQSRPSSREGCYSGCSSAFRSAHGDRDDLP). Basic and acidic residues predominate over residues 568-581 (EESKPSEVARESTD).

It belongs to the ADIP family. In terms of assembly, interacts with SSX2 and SSX3. Does not interact with SSX1 and SSX4. Interacts with afadin and alpha-actinin. Interacts with VAV2. Interacts with PCM1. Interacts with WRAP73. In terms of tissue distribution, widely expressed.

It localises to the cell junction. It is found in the adherens junction. Its subcellular location is the nucleus. The protein localises to the cytoplasm. The protein resides in the cytoskeleton. It localises to the microtubule organizing center. It is found in the centrosome. Its subcellular location is the centriolar satellite. The protein localises to the cilium basal body. Its function is as follows. Belongs to an adhesion system, which plays a role in the organization of homotypic, interneuronal and heterotypic cell-cell adherens junctions (AJs). May connect the nectin-afadin and E-cadherin-catenin system through alpha-actinin and may be involved in organization of the actin cytoskeleton at AJs through afadin and alpha-actinin. Acts as a centrosome maturation factor, probably by maintaining the integrity of the pericentriolar material and proper microtubule nucleation at mitotic spindle poles. The function seems to implicate at least in part WRAP73; the SSX2IP:WRAP73 complex is proposed to act as regulator of spindle anchoring at the mitotic centrosome. Involved in cell movement: localizes at the leading edge of moving cells in response to PDGF and is required for the formation of the leading edge and the promotion of cell movement, possibly via activation of Rac signaling. Involved in ciliogenesis. It is required for targeted recruitment of the BBSome, CEP290, RAB8, and SSTR3 to the cilia. This chain is Afadin- and alpha-actinin-binding protein (Ssx2ip), found in Mus musculus (Mouse).